An 859-amino-acid polypeptide reads, in one-letter code: Envelope glycoprotein gp160 (859 aa).

Positions 1 to 24 are cleaved as a signal peptide; that stretch reads MCGRNQLFVASLLASACLIYCVQY. At 25–673 the chain is on the extracellular side; sequence VTVFYGVPVW…LTSWIKYIQY (649 aa). N-linked (GlcNAc...) asparagine; by host glycosylation occurs at N36. A disulfide bond links C43 and C56. Residues N69, N78, N113, N119, N131, N137, N145, N160, N173, N186, N200, N232, N235, N242, N266, N272, N283, N294, N304, N359, N392, N402, N405, N442, N457, and N460 are each glycosylated (N-linked (GlcNAc...) asparagine; by host). Intrachain disulfides connect C100/C208, C107/C199, C112/C157, C221/C251, and C231/C243. The tract at residues 112–156 is V1; the sequence is CNSTTAKNTTSTPTTTTTANTTIGENSSCIRTDNCTGLGEEEMVD. Positions 157 to 199 are V2; sequence CQFNMTGLERDKKKLYNETWYSKDVVCESNDTKKEKTCYMNHC. Positions 299–331 are V3; that stretch reads CKRPGNKTVVPITLMSGLVFHSQPINRRPRQAW. A disulfide bridge connects residues C299 and C332. 2 disulfides stabilise this stretch: C384/C441 and C391/C414. A V4 region spans residues 391 to 414; that stretch reads CNMTWFLNWVENRTNQTQHNYVPC. Positions 457 to 463 are V5; that stretch reads NQTNITF. The fusion peptide stretch occupies residues 506–526; the sequence is GVFVLGFLGFLTTAGAAMGAA. Residues 569 to 585 are immunosuppression; the sequence is LQARVTAIEKYLKDQAQ. N-linked (GlcNAc...) asparagine; by host glycosylation is found at N605, N614, and N630. Residues 614 to 646 are a coiled coil; that stretch reads NMTWQEWEQRIRNLEANISESLEQAQIQQEKNM. The tract at residues 651 to 672 is MPER; binding to GalCer; it reads KLNSWDVFGNWFDLTSWIKYIQ. A helical membrane pass occupies residues 674–694; the sequence is GVYIVVGIIVLRIVIYVVQML. The Cytoplasmic segment spans residues 695-859; the sequence is SRLRKGYRPV…IRQGAEIALL (165 aa). Residues 701–704 carry the YXXV motif; contains endocytosis signal motif; it reads YRPV. Residue C767 is the site of S-palmitoyl cysteine; by host attachment. Positions 858 to 859 match the Di-leucine internalization motif motif; sequence LL.

The mature envelope protein (Env) consists of a homotrimer of non-covalently associated gp120-gp41 heterodimers. The resulting complex protrudes from the virus surface as a spike. There seems to be as few as 10 spikes on the average virion. Interacts with human CD4, CCR5 and CXCR4, to form a P4HB/PDI-CD4-CXCR4-gp120 complex. Gp120 also interacts with the C-type lectins CD209/DC-SIGN and CLEC4M/DC-SIGNR (collectively referred to as DC-SIGN(R)). Gp120 and gp41 interact with GalCer. In terms of assembly, the mature envelope protein (Env) consists of a homotrimer of non-covalently associated gp120-gp41 heterodimers. The resulting complex protrudes from the virus surface as a spike. There seems to be as few as 10 spikes on the average virion. Specific enzymatic cleavages in vivo yield mature proteins. Envelope glycoproteins are synthesized as an inactive precursor that is heavily N-glycosylated and processed likely by host cell furin in the Golgi to yield the mature SU and TM proteins. The cleavage site between SU and TM requires the minimal sequence [KR]-X-[KR]-R. In terms of processing, palmitoylation of the transmembrane protein and of Env polyprotein (prior to its proteolytic cleavage) is essential for their association with host cell membrane lipid rafts. Palmitoylation is therefore required for envelope trafficking to classical lipid rafts, but not for viral replication.

Its subcellular location is the virion membrane. The protein resides in the host cell membrane. It localises to the host endosome membrane. The surface protein gp120 (SU) attaches the virus to the host lymphoid cell by binding to the primary receptor CD4. This interaction induces a structural rearrangement creating a high affinity binding site for a chemokine coreceptor like CXCR4 and/or CCR5. This peculiar 2 stage receptor-interaction strategy allows gp120 to maintain the highly conserved coreceptor-binding site in a cryptic conformation, protected from neutralizing antibodies. Since CD4 also displays a binding site for the disulfide-isomerase P4HB/PDI, a P4HB/PDI-CD4-CXCR4-gp120 complex may form. In that complex, P4HB/PDI could reach and reduce gp120 disulfide bonds, causing major conformational changes in gp120. TXN, another PDI family member could also be involved in disulfide rearrangements in Env during fusion. These changes are transmitted to the transmembrane protein gp41 and are thought to activate its fusogenic potential by unmasking its fusion peptide. Functionally, the surface protein gp120 is a ligand for CD209/DC-SIGN and CLEC4M/DC-SIGNR, which are respectively found on dendritic cells (DCs), and on endothelial cells of liver sinusoids and lymph node sinuses. These interactions allow capture of viral particles at mucosal surfaces by these cells and subsequent transmission to permissive cells. DCs are professional antigen presenting cells, critical for host immunity by inducing specific immune responses against a broad variety of pathogens. They act as sentinels in various tissues where they take up antigen, process it, and present it to T-cells following migration to lymphoid organs. HIV subverts the migration properties of dendritic cells to gain access to CD4+ T-cells in lymph nodes. Virus transmission to permissive T-cells occurs either in trans (without DCs infection, through viral capture and transmission), or in cis (following DCs productive infection, through the usual CD4-gp120 interaction), thereby inducing a robust infection. In trans infection, bound virions remain infectious over days and it is proposed that they are not degraded, but protected in non-lysosomal acidic organelles within the DCs close to the cell membrane thus contributing to the viral infectious potential during DCs' migration from the periphery to the lymphoid tissues. On arrival at lymphoid tissues, intact virions recycle back to DCs' cell surface allowing virus transmission to CD4+ T-cells. Virion capture also seems to lead to MHC-II-restricted viral antigen presentation, and probably to the activation of HIV-specific CD4+ cells. Its function is as follows. The transmembrane protein gp41 (TM) acts as a class I viral fusion protein. Under the current model, the protein has at least 3 conformational states: pre-fusion native state, pre-hairpin intermediate state, and post-fusion hairpin state. During fusion of viral and target intracellular membranes, the coiled coil regions (heptad repeats) assume a trimer-of-hairpins structure, positioning the fusion peptide in close proximity to the C-terminal region of the ectodomain. The formation of this structure appears to drive apposition and subsequent fusion of viral and target cell membranes. Complete fusion occurs in host cell endosomes and is dynamin-dependent, however some lipid transfer might occur at the plasma membrane. The virus undergoes clathrin-dependent internalization long before endosomal fusion, thus minimizing the surface exposure of conserved viral epitopes during fusion and reducing the efficacy of inhibitors targeting these epitopes. Membranes fusion leads to delivery of the nucleocapsid into the cytoplasm. In terms of biological role, the envelope glycoprotein gp160 precursor down-modulates cell surface CD4 antigen by interacting with it in the endoplasmic reticulum and blocking its transport to the cell surface. The gp120-gp41 heterodimer seems to contribute to T-cell depletion during HIV-1 infection. The envelope glycoproteins expressed on the surface of infected cells induce apoptosis through an interaction with uninfected cells expressing the receptor (CD4) and the coreceptors CXCR4 or CCR5. This type of bystander killing may be obtained by at least three distinct mechanisms. First, the interaction between the 2 cells can induce cellular fusion followed by nuclear fusion within the syncytium. Syncytia are condemned to die from apoptosis. Second, the 2 interacting cells may not fuse entirely and simply exchange plasma membrane lipids, after a sort of hemifusion process, followed by rapid death. Third, it is possible that virus-infected cells, on the point of undergoing apoptosis, fuse with CD4-expressing cells, in which case apoptosis is rapidly transmitted from one cell to the other and thus occurs in a sort of contagious fashion. Functionally, the gp120-gp41 heterodimer allows rapid transcytosis of the virus through CD4 negative cells such as simple epithelial monolayers of the intestinal, rectal and endocervical epithelial barriers. Both gp120 and gp41 specifically recognize glycosphingolipids galactosyl-ceramide (GalCer) or 3' sulfo-galactosyl-ceramide (GalS) present in the lipid rafts structures of epithelial cells. Binding to these alternative receptors allows the rapid transcytosis of the virus through the epithelial cells. This transcytotic vesicle-mediated transport of virions from the apical side to the basolateral side of the epithelial cells does not involve infection of the cells themselves. The polypeptide is Envelope glycoprotein gp160 (env) (Homo sapiens (Human)).